The sequence spans 342 residues: Phenylalanine--tRNA ligase alpha subunit (342 aa).

Glu257 provides a ligand contact to Mg(2+).

This sequence belongs to the class-II aminoacyl-tRNA synthetase family. Phe-tRNA synthetase alpha subunit type 1 subfamily. Tetramer of two alpha and two beta subunits. Mg(2+) is required as a cofactor.

Its subcellular location is the cytoplasm. The catalysed reaction is tRNA(Phe) + L-phenylalanine + ATP = L-phenylalanyl-tRNA(Phe) + AMP + diphosphate + H(+). In Legionella pneumophila subsp. pneumophila (strain Philadelphia 1 / ATCC 33152 / DSM 7513), this protein is Phenylalanine--tRNA ligase alpha subunit.